The primary structure comprises 465 residues: uncharacterized protein (465 aa).

Over residues 87–112 (KTSQQIDSSPPQTPTTSNGSMMTRRQ) the composition is skewed to polar residues. Disordered stretches follow at residues 87 to 169 (KTSQ…SYDD) and 201 to 244 (EGYI…NNIF). Positions 113–139 (NANNAISSNNNTNTNVTNGSSSNTSLN) are enriched in low complexity. Acidic residues predominate over residues 141 to 157 (GDEEQEEEEEEENDEDS). Residues 217 to 244 (NRNNNNNNINKNNNNNINNNNNNNNNIF) show a composition bias toward low complexity.

This is an uncharacterized protein from Dictyostelium discoideum (Social amoeba).